The chain runs to 290 residues: uncharacterized protein (290 aa).

A run of 6 helical transmembrane segments spans residues 71 to 91 (FWSF…VKNI), 124 to 144 (GILI…LPGM), 155 to 175 (IIIG…YILV), 202 to 222 (FILV…LQLV), 234 to 254 (MFSI…VLTP), and 262 to 282 (ILLS…VLVV).

The protein belongs to the TatC family.

Its subcellular location is the plastid. It localises to the chloroplast membrane. This is an uncharacterized protein from Guillardia theta (Cryptophyte).